A 1363-amino-acid polypeptide reads, in one-letter code: Kinesin-like protein kif7 (1363 aa).

The region spanning 15–347 is the Kinesin motor domain; it reads AVQVAVRVRP…LNYAKRARNI (333 aa). Residue 94–101 coordinates ATP; the sequence is GQTGSGKT. Coiled coils occupy residues 358–385 and 491–552; these read EPDR…SETR and EDWR…LLAQ. Positions 603-622 are enriched in polar residues; it reads DSSSYSEQTQWDGTHGNTHC. The interval 603 to 642 is disordered; it reads DSSSYSEQTQWDGTHGNTHCESSRKLNRDEDGHMQTTRDK. Residues 623-640 show a composition bias toward basic and acidic residues; that stretch reads ESSRKLNRDEDGHMQTTR. Coiled-coil stretches lie at residues 714 to 1068 and 1116 to 1225; these read LLQA…AAIE and DKVV…LREM. A disordered region spans residues 1314 to 1346; that stretch reads IVQPGMNSTHWSGSTSLPVTRPRREPRRSSLNT. Residues 1318-1331 are compositionally biased toward polar residues; it reads GMNSTHWSGSTSLP.

It belongs to the TRAFAC class myosin-kinesin ATPase superfamily. Kinesin family. KIF27 subfamily. Binds microtubules. Interacts with gli1 and sufu.

The protein localises to the cytoplasm. The protein resides in the cytoskeleton. It is found in the cell projection. Its subcellular location is the cilium. Acts downstream of smo as an intracellular repressor of hedgehog signaling pathway, mainly through the suppression of gli1 activity. This negative regulatory effect is enhanced in conjunction with the suppressor of fused (sufu) protein. Positively regulates gli2a activity by promoting its dissociation from sufu. Involved in the regulation of microtubular dynamics. The sequence is that of Kinesin-like protein kif7 (kif7) from Danio rerio (Zebrafish).